The chain runs to 393 residues: Asparagine--oxo-acid transaminase (393 aa).

L-asparagine is bound by residues Gly39, Trp126, and Asn176. Lys239 carries the N6-(pyridoxal phosphate)lysine modification. Arg370 contributes to the L-asparagine binding site.

It belongs to the class-I pyridoxal-phosphate-dependent aminotransferase family. It depends on pyridoxal 5'-phosphate as a cofactor.

It carries out the reaction a 2-oxocarboxylate + L-asparagine = 2-oxosuccinamate + an L-alpha-amino acid. It catalyses the reaction L-asparagine + 2-oxoglutarate = 2-oxosuccinamate + L-glutamate. Functionally, catalyzes the transamination reaction between L-asparagine and 2-oxoglutarate to produce L-glutamate and 2-oxosuccinamate. Is not active with pyruvate as amine acceptor. May also use other amino acids as substrates. The polypeptide is Asparagine--oxo-acid transaminase (Streptococcus mutans serotype c (strain ATCC 700610 / UA159)).